The chain runs to 102 residues: uncharacterized protein (102 aa).

Residues Cys10, Cys16, and Cys55 each contribute to the [3Fe-4S] cluster site. The interval 66-102 is disordered; it reads DAGDDERASADPARSPAEAERHAAKDQRIPGGHDGTV. Residues 82-93 show a composition bias toward basic and acidic residues; it reads AEAERHAAKDQR.

Requires [3Fe-4S] cluster as cofactor.

Its function is as follows. Electron transport protein for the cytochrome systems. This is an uncharacterized protein from Sinorhizobium fredii (strain NBRC 101917 / NGR234).